Reading from the N-terminus, the 446-residue chain is MTVMVSQIESIGQIVRDEVTVIWILMALVLLAYLILPNPTYRTNVKVPTVRYLGGWIPDQVDRLFFNTKATSVIYDGYKQYKKKAYKVLKADGDLVVLSTRKSSSPPPHSYEVFLRLVARVGARVFIGETLCRDEQWLKASIDYTKNIFVTIALLRPVPGFLQPLVGRVLPSSRSLNHQLAYIKNKFLGPLIEQRREMESSGDSKYEKPDDFLQWMMDLAKTEQESHPHNLAQRLLGITSMAVVHTSAMSLTHILYDLLVMPQWLQPLRDEIQEVNPDWHSTTQAHLIGLKGMDSFLKESQRFNPPGELSFHRVVKHDLTLSDGLFLPKGTHICMAAGPISRDADVMSDPDVFDAFRFVKENRPTSGFVSTGVTNMHFGLGRYACPGRFFAAFVMKAILSRFLTNYDFRFGPDQKDRPKNMMIGDKIVPNVSTPIFIRKRTTSQPL.

The chain crosses the membrane as a helical span at residues 19-39 (VTVIWILMALVLLAYLILPNP). C385 serves as a coordination point for heme. The N-linked (GlcNAc...) asparagine glycan is linked to N430.

Belongs to the cytochrome P450 family. It depends on heme as a cofactor.

The protein resides in the membrane. Its pathway is secondary metabolite biosynthesis. Cytochrome P450 monooxygenase; part of the gene cluster that mediates the biosynthesis of the indole diterpenes penitrems. The geranylgeranyl diphosphate (GGPP) synthase ptmG catalyzes the first step in penitrem biosynthesis via conversion of farnesyl pyrophosphate and isopentyl pyrophosphate into geranylgeranyl pyrophosphate (GGPP). Condensation of indole-3-glycerol phosphate with GGPP by the prenyl transferase ptmC then forms 3-geranylgeranylindole (3-GGI). Epoxidation by the FAD-dependent monooxygenase ptmM leads to a epoxidized-GGI that is substrate of the terpene cyclase ptmB for cyclization to yield paspaline. Paspaline is subsequently converted to 13-desoxypaxilline by the cytochrome P450 monooxygenase ptmP, the latter being then converted to paxilline by the cytochrome P450 monooxygenase ptmQ. Paxilline is converted to beta-paxitriol via C-10 ketoreduction by the short-chain dehydrogenase ptmH which can be monoprenylated at the C-20 by the indole diterpene prenyltransferase ptmD. A two-step elimination (acetylation and elimination) process performed by the O-acetyltransferase ptmV and ptmI leads to the production of the prenylated form of penijanthine. The FAD-linked oxidoreductase ptmO then converts the prenylated form of penijanthine into PC-M5 which is in turn transformed into PC-M4 by the aromatic dimethylallyltransferase ptmE. Five sequential oxidative transformations performed by the cytochrome P450 monooxygenases ptmK, ptmU, ptmL, ptmN and ptmJ yield the various penitrem compounds. PtmK, ptmU and ptmM are involved in the formation of the key bicyclic ring of penitrem C via the formation of the intermediates secopenitrem D and penitrem D. PtmL catalyzes the epoxidation of penitrem D and C to yield penitrem B and F, respectively. PtmJ catalyzes the last benzylic hydroxylation to convert penitrem B to prenitrem E and penitrem F to penitrem A. The sequence is that of Cytochrome P450 monooxygenase ptmP from Penicillium ochrochloron.